Here is a 581-residue protein sequence, read N- to C-terminus: Arginine--tRNA ligase (581 aa).

Positions 126-136 (PNLAKEMHVGH) match the 'HIGH' region motif.

This sequence belongs to the class-I aminoacyl-tRNA synthetase family. Monomer.

It localises to the cytoplasm. The enzyme catalyses tRNA(Arg) + L-arginine + ATP = L-arginyl-tRNA(Arg) + AMP + diphosphate. This Shewanella loihica (strain ATCC BAA-1088 / PV-4) protein is Arginine--tRNA ligase.